The primary structure comprises 1336 residues: MTLDRPGEGATMLKTFTVLLFCIRMSLGMTSIVMDPQPELWIESNYPQAPWENITLWCRSPSRISSKFLLLKDKTQMTWIRPSHKTFQVSFLIGALTESNAGLYRCCYWKETGWSKPSKVLELEAPGQLPKPIFWIQAETPALPGCNVNILCHGWLQDLVFMLFKEGYAEPVDYQVPTGTMAIFSIDNLTPEDEGVYICRTHIQMLPTLWSEPSNPLKLVVAGLYPKPTLTAHPGPIMAPGESLNLRCQGPIYGMTFALMRVEDLEKSFYHKKTIKNEANFFFQSLKIQDTGHYLCFYYDASYRGSLLSDVLKIWVTDTFPKTWLLARPSAVVQMGQNVSLRCRGPVDGVGLALYKKGEDKPLQFLDATSIDDNTSFFLNNVTYSDTGIYSCHYLLTWKTSIRMPSHNTVELMVVDKPPKPSLSAWPSTVFKLGKAITLQCRVSHPVLEFSLEWEERETFQKFSVNGDFIISNVDGKGTGTYSCSYRVETHPNIWSHRSEPLKLMGPAGYLTWNYVLNEAIRLSLIMQLVALLLVVLWIRWKCRRLRIREAWLLGTAQGVTMLFIVTALLCCGLCNGVLIEETEIVMPTPKPELWAETNFPLAPWKNLTLWCRSPSGSTKEFVLLKDGTGWIATRPASEQVRAAFPLGALTQSHTGSYHCHSWEEMAVSEPSEALELVGTDILPKPVISASPTIRGQELQLRCKGWLAGMGFALYKEGEQEPVQQLGAVGREAFFTIQRMEDKDEGNYSCRTHTEKRPFKWSEPSEPLELVIKEMYPKPFFKTWASPVVTPGARVTFNCSTPHQHMSFILYKDGSEIASSDRSWASPGASAAHFLIISVGIGDGGNYSCRYYDFSIWSEPSDPVELVVTEFYPKPTLLAQPGPVVFPGKSVILRCQGTFQGMRFALLQEGAHVPLQFRSVSGNSADFLLHTVGAEDSGNYSCIYYETTMSNRGSYLSMPLMIWVTDTFPKPWLFAEPSSVVPMGQNVTLWCRGPVHGVGYILHKEGEATSMQLWGSTSNDGAFPITNISGTSMGRYSCCYHPDWTSSIKIQPSNTLELLVTGLLPKPSLLAQPGPMVAPGENMTLQCQGELPDSTFVLLKEGAQEPLEQQRPSGYRADFWMPAVRGEDSGIYSCVYYLDSTPFAASNHSDSLEIWVTDKPPKPSLSAWPSTMFKLGKDITLQCRGPLPGVEFVLEHDGEEAPQQFSEDGDFVINNVEGKGIGNYSCSYRLQAYPDIWSEPSDPLELVGAAGPVAQECTVGNIVRSSLIVVVVVALGVVLAIEWKKWPRLRTRGSETDGRDQTIALEECNQEGEPGTPANSPSSTSQRISVELPVPI.

The signal sequence occupies residues 1-28 (MTLDRPGEGATMLKTFTVLLFCIRMSLG). Over 29–518 (MTSIVMDPQP…GYLTWNYVLN (490 aa)) the chain is Extracellular. Ig-like C2-type domains are found at residues 38–122 (PELW…KVLE), 137–222 (QAET…LVVA), 226–312 (PKPT…SDVL), 321–408 (PKTW…PSHN), and 419–500 (PKPS…HRSE). A glycan (N-linked (GlcNAc...) asparagine) is linked at Asn-53. A disulfide bond links Cys-58 and Cys-106. Residues Cys-248 and Cys-296 are joined by a disulfide bond. 3 N-linked (GlcNAc...) asparagine glycosylation sites follow: Asn-338, Asn-374, and Asn-381. 2 disulfides stabilise this stretch: Cys-343–Cys-392 and Cys-441–Cys-484. The helical transmembrane segment at 519-539 (EAIRLSLIMQLVALLLVVLWI) threads the bilayer. The Cytoplasmic segment spans residues 540–559 (RWKCRRLRIREAWLLGTAQG). Residues 560 to 580 (VTMLFIVTALLCCGLCNGVLI) traverse the membrane as a helical segment. At 581 to 1336 (EETEIVMPTP…RISVELPVPI (756 aa)) the chain is on the extracellular side. Ig-like C2-type domains are found at residues 589–677 (TPKP…ALEL), 686–760 (PVIS…RPFK), 777–869 (PKPF…LVVT), 873–958 (PKPT…YLSM), 965–1060 (TDTF…ELLV), 1065–1150 (PKPS…NHSD), and 1161–1242 (PKPS…EPSD). N-linked (GlcNAc...) asparagine glycans are attached at residues Asn-607, Asn-747, Asn-798, Asn-846, Asn-939, Asn-986, Asn-1027, and Asn-1082. Cys-703 and Cys-750 form a disulfide bridge. Intrachain disulfides connect Cys-799–Cys-849 and Cys-895–Cys-942. Cys-1087 and Cys-1134 form a disulfide bridge. N-linked (GlcNAc...) asparagine glycosylation is found at Asn-1147 and Asn-1223. Cysteines 1183 and 1226 form a disulfide. Residues 1308–1336 (CNQEGEPGTPANSPSSTSQRISVELPVPI) form a disordered region. Positions 1317-1328 (PANSPSSTSQRI) are enriched in polar residues.

Interacts with INHA. In PubMed:12385827 does not interact with INHA; standard receptor binding assay. Interacts with ACVR1B; the interaction appears to be ligand-dependent as it is diminished by inhibin B and activin A. Interacts with ACVR2A, ACVR2B, ACVRL1 and BMPR1B. Interacts with HECTD1. As to expression, highly expressed in pancreas, testis and fetal liver. Moderately expressed in heart, prostate and small intestine. Expressed at very low levels in brain, thymus, ovary, colon, fetal lung and fetal kidney. Expressed in muscle. Isoform 3 is expressed in pituitary gland.

The protein resides in the membrane. The protein localises to the secreted. In terms of biological role, seems to be a coreceptor in inhibin signaling, but seems not to be a high-affinity inhibin receptor. Antagonizes activin A signaling in the presence or absence of inhibin B. Necessary to mediate a specific antagonistic effect of inhibin B on activin-stimulated transcription. The sequence is that of Immunoglobulin superfamily member 1 (IGSF1) from Homo sapiens (Human).